Here is a 650-residue protein sequence, read N- to C-terminus: Probable Xaa-Pro aminopeptidase P (650 aa).

Mn(2+)-binding residues include D447, D458, E556, and E570.

Belongs to the peptidase M24B family. It depends on Mn(2+) as a cofactor.

The enzyme catalyses Release of any N-terminal amino acid, including proline, that is linked to proline, even from a dipeptide or tripeptide.. Functionally, catalyzes the removal of a penultimate prolyl residue from the N-termini of peptides. The sequence is that of Probable Xaa-Pro aminopeptidase P (AMPP) from Phaeosphaeria nodorum (strain SN15 / ATCC MYA-4574 / FGSC 10173) (Glume blotch fungus).